A 1029-amino-acid polypeptide reads, in one-letter code: MSAAKENPCRKFQANIFNKSKCQNCFKPRESHLLNDEDLTQAKPIYGGWLLLAPDGTDFDNPVHRSRKWQRRFFILYEHGLLRYALDEMPTTLPQGTINMNQCTDVVDGEARTGQKFSLCILTPDKEHFIRAETKEIISGWLEMLMVYPRTNKQNQKKKRKVEPPTPQEPGPAKMAVTSSSGGSSGSSSSSSSSSIPSAEKVPTTKSTLWQEEMRAKDQPDGTSLSPVQSPSQSQPPAACTPRETGLDSKEDENILSGDRVDGGRKVRVESGYFSLEKAKQDLRAEEQLPPLLSPPSPSTPHSRRSQVIEKFEALDIEKAEHMETNMLILTTPSSDTRQGRSERRAIPRKRDFASETPTAPLSDACPLSPHRRAKSLDRRSTESSMTPDLLNFKKGWLTKQYEDGQWKKHWFVLADQSLRYYRDSVAEEAADLDGEINLSTCYDVTEYPVQRNYGFQIHTKEGEFTLSAMTSGIRRNWIQTIMKHVLPTSAPDVTSSLPEGKNKSTSFDTCLRPSEKQEAEPGEPDPEQKKSRARERRREGRSKTFDWAEFRPIQQALAQERASTVGSSDSGDPGCLEAEPGELERERARRREERRKRFGMLDTNDGPGMEDTALRMDIDRSPGLLGTPDLKTQNVHVEIEQRWHQVETTPLREEKQVPIAPLHLSLEDRSERLSTHELTSLLEKELEQSQKEASDLLEQNRLLQDQLRVALGREQSAREGYVLQATCERGFAAMEETHQKKIEDLQRQHQRELEKLREEKDRLLAEETAATISAIEAMKNAHREEMERELEKSQRSQISSINSDIEALRRQYLEELQSVQRELEVLSEQYSQKCLENAHLAQALEAERQALRQCQRENQELNAHNQELNNRLAAEITRLRTLLTREGGGESTGLPLTQGKDAYELEVLLRVKESEIQYLKQEISSLKDELQTALRDKKYASDKYKDIYTELSIAKAKADCDISRLKEQLKAATEALGEKSPEGTTVSGYDIMKSKSNPDFLKKDRSCVTRQLRNIRSKSVIEQVSWDN.

Positions 1 to 387 (MSAAKENPCR…DRRSTESSMT (387 aa)) are interaction with F-actin. A PH 1 domain is found at 43–150 (KPIYGGWLLL…WLEMLMVYPR (108 aa)). Residues 152-267 (NKQNQKKKRK…GDRVDGGRKV (116 aa)) are disordered. A compositionally biased stretch (low complexity) spans 179-195 (SSSGGSSGSSSSSSSSS). 5 positions are modified to phosphoserine: S198, S224, S226, S230, and S232. Low complexity predominate over residues 226 to 237 (SPVQSPSQSQPP). Over residues 245–267 (TGLDSKEDENILSGDRVDGGRKV) the composition is skewed to basic and acidic residues. Residues S271, S275, S294, and S297 each carry the phosphoserine modification. 2 disordered regions span residues 279 to 306 (AKQD…SRRS) and 333 to 383 (PSSD…RSTE). At T300 the chain carries Phosphothreonine. The span at 338–354 (RQGRSERRAIPRKRDFA) shows a compositional bias: basic and acidic residues. S369 is subject to Phosphoserine. The PH 2 domain maps to 391-487 (LNFKKGWLTK…WIQTIMKHVL (97 aa)). The segment at 490 to 614 (SAPDVTSSLP…NDGPGMEDTA (125 aa)) is disordered. The span at 492–509 (PDVTSSLPEGKNKSTSFD) shows a compositional bias: polar residues. At S497 the chain carries Phosphoserine. The segment covering 527–550 (PEQKKSRARERRREGRSKTFDWAE) has biased composition (basic and acidic residues). The interaction with RHOA stretch occupies residues 550-828 (EFRPIQQALA…SVQRELEVLS (279 aa)). Positions 562–571 (RASTVGSSDS) are enriched in polar residues. The span at 583-592 (ELERERARRR) shows a compositional bias: basic and acidic residues. S622 carries the post-translational modification Phosphoserine. Phosphothreonine is present on T650. Residues 675 to 979 (STHELTSLLE…LKAATEALGE (305 aa)) are a coiled coil. S804 bears the Phosphoserine mark. Residues 828-883 (SEQYSQKCLENAHLAQALEAERQALRQCQRENQELNAHNQELNNRLAAEITRLRTL) form an interaction with PPP1R12A region. S981, S997, S1018, and S1020 each carry phosphoserine.

As to quaternary structure, binds RHOA, PPP1R12A/MBS and PPP1R12C/MBS85 through adjacent coiled coil domains. Interacts with MYZAP. Binds F-actin through its N-terminus.

The protein localises to the cytoplasm. It localises to the cytoskeleton. Its function is as follows. Targets myosin phosphatase to the actin cytoskeleton. Required for the regulation of the actin cytoskeleton by RhoA and ROCK1. Depletion leads to an increased number of stress fibers in smooth muscle cells through stabilization of actin fibers by phosphorylated myosin. Overexpression of MRIP as well as its F-actin-binding region leads to disassembly of stress fibers in neuronal cells. The polypeptide is Myosin phosphatase Rho-interacting protein (Mprip) (Rattus norvegicus (Rat)).